A 572-amino-acid polypeptide reads, in one-letter code: AAA ATPase forming ring-shaped complexes (572 aa).

Positions 1–18 (MTTASQQTSSHSTASSTS) are enriched in low complexity. The disordered stretch occupies residues 1 to 30 (MTTASQQTSSHSTASSTSRKGNNNDATPSL). Residues 42–70 (TRNAKLVEMLKASRDKLDALNEQIRALSD) are a coiled coil. ATP is bound at residue 258 to 263 (GCGKTL). Residues 543–572 (VAHHNRKTTTETEATEPEGTDSGKGHTDAS) form a disordered region. The span at 563 to 572 (DSGKGHTDAS) shows a compositional bias: basic and acidic residues.

This sequence belongs to the AAA ATPase family. In terms of assembly, homohexamer. Assembles into a hexameric ring structure.

The sequence is that of AAA ATPase forming ring-shaped complexes from Corynebacterium kroppenstedtii (strain DSM 44385 / JCM 11950 / CIP 105744 / CCUG 35717).